The following is a 521-amino-acid chain: ATP synthase subunit beta (521 aa).

Low complexity-rich tracts occupy residues 1–21 (MAKA…AAKA) and 28–42 (PKTT…TKSG). A disordered region spans residues 1-42 (MAKAATPKTTAAAEAKPAAKAPAKKAAPKTTAAAKPAATKSG). 199–206 (GGAGVGKT) provides a ligand contact to ATP.

It belongs to the ATPase alpha/beta chains family. As to quaternary structure, F-type ATPases have 2 components, CF(1) - the catalytic core - and CF(0) - the membrane proton channel. CF(1) has five subunits: alpha(3), beta(3), gamma(1), delta(1), epsilon(1). CF(0) has three main subunits: a(1), b(2) and c(9-12). The alpha and beta chains form an alternating ring which encloses part of the gamma chain. CF(1) is attached to CF(0) by a central stalk formed by the gamma and epsilon chains, while a peripheral stalk is formed by the delta and b chains.

It localises to the cell inner membrane. The enzyme catalyses ATP + H2O + 4 H(+)(in) = ADP + phosphate + 5 H(+)(out). Its function is as follows. Produces ATP from ADP in the presence of a proton gradient across the membrane. The catalytic sites are hosted primarily by the beta subunits. This Brucella canis (strain ATCC 23365 / NCTC 10854 / RM-666) protein is ATP synthase subunit beta.